The primary structure comprises 445 residues: MEKIKVALVSLGCDKNRIDSELMLYKLNEEAELVKNPKEAQVIIVNTCGFIETAKEESINTILQMASYKKTHNCKVLVVTGCLTQRYKGELKELIPEMDIMLGVNDYDKLLESIKVFLKSGEKSFYHKYSDTKINEGNRILTTPTYTAYVRIAEGCNNFCTYCAIPRIRGKYRSRKKENILKEVENLAKQGVKEIILIAQDTTMYGIDIYGKKVLHELLRDISKVEGVKWIRLLYCYPEEITKELIEEIKNNDKVCKYLDLPIQQISNSVLKRMGRKTTKETIINIIKKLRKEIEGITLRTSLIVGFPGETEGEFSELKEFVSDVKLDKLGVFKYSKEEGTSAALMEEQIDEEIKEKREEEIMILQQSISKDINKEKIGKIYEVIVEGIKEDMYYGRNYEMSPEIDGEIYFEKDENVRIGDIIKVKVTHSLEYDLIGVVYNELSK.

Positions 4–119 constitute an MTTase N-terminal domain; it reads IKVALVSLGC…LLESIKVFLK (116 aa). 6 residues coordinate [4Fe-4S] cluster: cysteine 13, cysteine 48, cysteine 82, cysteine 156, cysteine 160, and cysteine 163. In terms of domain architecture, Radical SAM core spans 142-372; the sequence is TTPTYTAYVR…MILQQSISKD (231 aa). In terms of domain architecture, TRAM spans 375–441; it reads KEKIGKIYEV…EYDLIGVVYN (67 aa).

The protein belongs to the methylthiotransferase family. RimO subfamily. [4Fe-4S] cluster is required as a cofactor.

Its subcellular location is the cytoplasm. The catalysed reaction is L-aspartate(89)-[ribosomal protein uS12]-hydrogen + (sulfur carrier)-SH + AH2 + 2 S-adenosyl-L-methionine = 3-methylsulfanyl-L-aspartate(89)-[ribosomal protein uS12]-hydrogen + (sulfur carrier)-H + 5'-deoxyadenosine + L-methionine + A + S-adenosyl-L-homocysteine + 2 H(+). Catalyzes the methylthiolation of an aspartic acid residue of ribosomal protein uS12. In Clostridium botulinum (strain Okra / Type B1), this protein is Ribosomal protein uS12 methylthiotransferase RimO.